A 209-amino-acid chain; its full sequence is Protein-L-isoaspartate O-methyltransferase (209 aa).

Ser-60 is an active-site residue.

Belongs to the methyltransferase superfamily. L-isoaspartyl/D-aspartyl protein methyltransferase family.

The protein resides in the cytoplasm. The catalysed reaction is [protein]-L-isoaspartate + S-adenosyl-L-methionine = [protein]-L-isoaspartate alpha-methyl ester + S-adenosyl-L-homocysteine. Catalyzes the methyl esterification of L-isoaspartyl residues in peptides and proteins that result from spontaneous decomposition of normal L-aspartyl and L-asparaginyl residues. It plays a role in the repair and/or degradation of damaged proteins. The chain is Protein-L-isoaspartate O-methyltransferase from Methanococcus vannielii (strain ATCC 35089 / DSM 1224 / JCM 13029 / OCM 148 / SB).